Here is a 203-residue protein sequence, read N- to C-terminus: Ribosomal RNA large subunit methyltransferase E (203 aa).

Gly59, Trp61, Asp79, Asp97, and Asp119 together coordinate S-adenosyl-L-methionine. The active-site Proton acceptor is the Lys159.

The protein belongs to the class I-like SAM-binding methyltransferase superfamily. RNA methyltransferase RlmE family.

It is found in the cytoplasm. The enzyme catalyses uridine(2552) in 23S rRNA + S-adenosyl-L-methionine = 2'-O-methyluridine(2552) in 23S rRNA + S-adenosyl-L-homocysteine + H(+). Specifically methylates the uridine in position 2552 of 23S rRNA at the 2'-O position of the ribose in the fully assembled 50S ribosomal subunit. The sequence is that of Ribosomal RNA large subunit methyltransferase E from Desulforapulum autotrophicum (strain ATCC 43914 / DSM 3382 / VKM B-1955 / HRM2) (Desulfobacterium autotrophicum).